The primary structure comprises 489 residues: Adenylosuccinate synthetase 2, chloroplastic (489 aa).

The transit peptide at 1–54 (MPLASLSLDPAPFPLIRPAAGWSGRVLPVPGPAPRLCRPLRAAPVAPATTDEPS) directs the protein to the chloroplast. GTP contacts are provided by residues 76–82 (GDEGKGK) and 104–106 (GHT). Catalysis depends on aspartate 77, which acts as the Proton acceptor. Mg(2+) contacts are provided by aspartate 77 and glycine 104. IMP is bound by residues 77–80 (DEGK), 102–105 (NAGH), threonine 194, arginine 208, glutamine 288, threonine 303, and arginine 367. Histidine 105 functions as the Proton donor in the catalytic mechanism. Residue 363 to 369 (TTTGRPR) participates in substrate binding. GTP-binding positions include arginine 369, 395 to 397 (KLD), and 478 to 480 (GVG).

This sequence belongs to the adenylosuccinate synthetase family. Homodimer. It depends on Mg(2+) as a cofactor.

It localises to the plastid. The protein resides in the chloroplast. The catalysed reaction is IMP + L-aspartate + GTP = N(6)-(1,2-dicarboxyethyl)-AMP + GDP + phosphate + 2 H(+). It functions in the pathway purine metabolism; AMP biosynthesis via de novo pathway; AMP from IMP: step 1/2. Plays an important role in the de novo pathway and in the salvage pathway of purine nucleotide biosynthesis. Catalyzes the first committed step in the biosynthesis of AMP from IMP. The polypeptide is Adenylosuccinate synthetase 2, chloroplastic (Sorghum bicolor (Sorghum)).